The sequence spans 469 residues: Glutamate--tRNA ligase 1 (469 aa).

A 'HIGH' region motif is present at residues 11 to 21 (PSPTGHLHLGG). The short motif at 238-242 (KLSKR) is the 'KMSKS' region element. Lysine 241 is an ATP binding site.

It belongs to the class-I aminoacyl-tRNA synthetase family. Glutamate--tRNA ligase type 1 subfamily. As to quaternary structure, monomer.

The protein resides in the cytoplasm. It catalyses the reaction tRNA(Glu) + L-glutamate + ATP = L-glutamyl-tRNA(Glu) + AMP + diphosphate. Functionally, catalyzes the attachment of glutamate to tRNA(Glu) in a two-step reaction: glutamate is first activated by ATP to form Glu-AMP and then transferred to the acceptor end of tRNA(Glu). In Ehrlichia canis (strain Jake), this protein is Glutamate--tRNA ligase 1.